The primary structure comprises 588 residues: DNA ligase (588 aa).

An ATP-binding site is contributed by Glu-248. Lys-250 acts as the N6-AMP-lysine intermediate in catalysis. ATP contacts are provided by Arg-255, Arg-270, Glu-300, Phe-341, Arg-418, and Lys-424.

It belongs to the ATP-dependent DNA ligase family. It depends on Mg(2+) as a cofactor.

It catalyses the reaction ATP + (deoxyribonucleotide)n-3'-hydroxyl + 5'-phospho-(deoxyribonucleotide)m = (deoxyribonucleotide)n+m + AMP + diphosphate.. In terms of biological role, DNA ligase that seals nicks in double-stranded DNA during DNA replication, DNA recombination and DNA repair. This is DNA ligase from Thermoplasma volcanium (strain ATCC 51530 / DSM 4299 / JCM 9571 / NBRC 15438 / GSS1).